The primary structure comprises 400 residues: ATP phosphoribosyltransferase regulatory subunit (400 aa).

The protein belongs to the class-II aminoacyl-tRNA synthetase family. HisZ subfamily. Heteromultimer composed of HisG and HisZ subunits.

The protein resides in the cytoplasm. The protein operates within amino-acid biosynthesis; L-histidine biosynthesis; L-histidine from 5-phospho-alpha-D-ribose 1-diphosphate: step 1/9. Required for the first step of histidine biosynthesis. May allow the feedback regulation of ATP phosphoribosyltransferase activity by histidine. The protein is ATP phosphoribosyltransferase regulatory subunit of Hahella chejuensis (strain KCTC 2396).